Consider the following 72-residue polypeptide: uncharacterized protein (72 aa).

It localises to the cytoplasm. It is found in the nucleus. This is an uncharacterized protein from Saccharomyces cerevisiae (strain ATCC 204508 / S288c) (Baker's yeast).